We begin with the raw amino-acid sequence, 415 residues long: Putative competence-damage inducible protein (415 aa).

This sequence belongs to the CinA family.

The protein is Putative competence-damage inducible protein of Limosilactobacillus reuteri (strain DSM 20016) (Lactobacillus reuteri).